A 506-amino-acid chain; its full sequence is UDP-N-acetylmuramoyl-L-alanyl-D-glutamate--2,6-diaminopimelate ligase (506 aa).

A UDP-N-acetyl-alpha-D-muramoyl-L-alanyl-D-glutamate-binding site is contributed by S42. 125-131 lines the ATP pocket; it reads GTSGKTT. UDP-N-acetyl-alpha-D-muramoyl-L-alanyl-D-glutamate-binding positions include 166–167, S193, and R201; that span reads TT. K233 is modified (N6-carboxylysine). Meso-2,6-diaminopimelate contacts are provided by residues R395, 419 to 422, G475, and E479; that span reads DNPR. The Meso-diaminopimelate recognition motif motif lies at 419–422; that stretch reads DNPR.

It belongs to the MurCDEF family. MurE subfamily. Requires Mg(2+) as cofactor. In terms of processing, carboxylation is probably crucial for Mg(2+) binding and, consequently, for the gamma-phosphate positioning of ATP.

It is found in the cytoplasm. The enzyme catalyses UDP-N-acetyl-alpha-D-muramoyl-L-alanyl-D-glutamate + meso-2,6-diaminopimelate + ATP = UDP-N-acetyl-alpha-D-muramoyl-L-alanyl-gamma-D-glutamyl-meso-2,6-diaminopimelate + ADP + phosphate + H(+). The protein operates within cell wall biogenesis; peptidoglycan biosynthesis. Its function is as follows. Catalyzes the addition of meso-diaminopimelic acid to the nucleotide precursor UDP-N-acetylmuramoyl-L-alanyl-D-glutamate (UMAG) in the biosynthesis of bacterial cell-wall peptidoglycan. This is UDP-N-acetylmuramoyl-L-alanyl-D-glutamate--2,6-diaminopimelate ligase from Streptomyces coelicolor (strain ATCC BAA-471 / A3(2) / M145).